The following is a 200-amino-acid chain: MKIGIIAYQGSFEEHYLQLKRAFDKWSINGEITPVKIPKDLKDIDGVIIPGGESTTIGLVAKRLGILDELKEKITSGLPVMGTCAGAIMLAKEVSDAKVGKTSQPLIGTMNISIIRNYYGRQRESFETIIDLSKIGKGKANVVFIRAPAITKLWGKAQSLAELNGVTVLAEENNILATTFHPELSDTTSIHEYFLHLVKG.

52-54 (GES) is a binding site for L-glutamine. Cys84 (nucleophile) is an active-site residue. L-glutamine is bound by residues Arg116 and 145-146 (IR). Catalysis depends on charge relay system residues His181 and Glu183.

This sequence belongs to the glutaminase PdxT/SNO family. In the presence of PdxS, forms a dodecamer of heterodimers. Only shows activity in the heterodimer.

The catalysed reaction is aldehydo-D-ribose 5-phosphate + D-glyceraldehyde 3-phosphate + L-glutamine = pyridoxal 5'-phosphate + L-glutamate + phosphate + 3 H2O + H(+). The enzyme catalyses L-glutamine + H2O = L-glutamate + NH4(+). It functions in the pathway cofactor biosynthesis; pyridoxal 5'-phosphate biosynthesis. Catalyzes the hydrolysis of glutamine to glutamate and ammonia as part of the biosynthesis of pyridoxal 5'-phosphate. The resulting ammonia molecule is channeled to the active site of PdxS. The polypeptide is Pyridoxal 5'-phosphate synthase subunit PdxT (Saccharolobus islandicus (strain L.S.2.15 / Lassen #1) (Sulfolobus islandicus)).